The sequence spans 251 residues: tRNA (guanine-N(1)-)-methyltransferase (251 aa).

Residues G114 and 134 to 139 (IGDYVL) each bind S-adenosyl-L-methionine.

Belongs to the RNA methyltransferase TrmD family. In terms of assembly, homodimer.

The protein resides in the cytoplasm. It carries out the reaction guanosine(37) in tRNA + S-adenosyl-L-methionine = N(1)-methylguanosine(37) in tRNA + S-adenosyl-L-homocysteine + H(+). Its function is as follows. Specifically methylates guanosine-37 in various tRNAs. The chain is tRNA (guanine-N(1)-)-methyltransferase from Pelotomaculum thermopropionicum (strain DSM 13744 / JCM 10971 / SI).